Consider the following 178-residue polypeptide: Putative type II secretion system M-type protein YghD (178 aa).

At 1–39 (MLRDKFIHYFQQWRERQLSRGEHWLAQHLAGRSPREKGM) the chain is on the cytoplasmic side. Residues 40–60 (LLAAVVFLFSVGYYVLIWQPL) form a helical membrane-spanning segment. Topologically, residues 61–178 (SERIEQQETI…NVQRLEFGRG (118 aa)) are periplasmic.

It belongs to the GSP M family.

The protein resides in the cell inner membrane. In terms of biological role, involved in a type II secretion system (T2SS, formerly general secretion pathway, GSP) for the export of folded proteins across the outer membrane. This Escherichia coli (strain K12) protein is Putative type II secretion system M-type protein YghD (yghD).